The primary structure comprises 545 residues: Tetrahydrocannabinolic acid synthase (545 aa).

Positions 1–28 are cleaved as a signal peptide; it reads MNCSAFSFWFVCKIIFFFLSFHIQISIA. Cys-37 and Cys-99 are joined by a disulfide. 2 N-linked (GlcNAc...) asparagine glycosylation sites follow: Asn-65 and Asn-89. The FAD-binding PCMH-type domain occupies 77–251; the sequence is TTPKPLVIVT…AAWKIKLVAV (175 aa). FAD-binding positions include 109 to 115 and Ser-120; that span reads TRSGGHD. Positions 114–176 form a cross-link, 6-(S-cysteinyl)-8alpha-(pros-histidyl)-FAD (His-Cys); the sequence is HDAEGMSYIS…ENLSFPGGYC (63 aa). Residue Asn-168 is glycosylated (N-linked (GlcNAc...) asparagine). Residues Cys-176, 180 to 184, Tyr-190, Glu-236, and Ile-241 each bind FAD; that span reads GVGGH. His-292 provides a ligand contact to cannabigerolate. 3 N-linked (GlcNAc...) asparagine glycosylation sites follow: Asn-297, Asn-305, and Asn-329. The cannabigerolate site is built by Tyr-417 and Glu-442. N-linked (GlcNAc...) asparagine glycosylation is present at Asn-467. 481 to 483 serves as a coordination point for FAD; sequence YLN. Catalysis depends on Tyr-484, which acts as the Proton acceptor. An N-linked (GlcNAc...) asparagine glycan is attached at Asn-499.

It belongs to the oxygen-dependent FAD-linked oxidoreductase family. Monomer. The cofactor is FAD. In terms of processing, glycosylated when produced in a heterologous system. The deglycosylated THCA synthase has more catalytic activity than the glycosylated form. The FAD cofactor is bound via a bicovalent 6-S-cysteinyl, 8alpha-N1-histidyl FAD linkage. As to expression, expressed in the secretory cells of glandular trichomes.

The protein resides in the secreted. It is found in the extracellular space. Its subcellular location is the apoplast. It catalyses the reaction cannabigerolate + O2 = Delta(9)-tetrahydrocannabinolate + H2O2. Its pathway is secondary metabolite biosynthesis; terpenoid biosynthesis. Its activity is regulated as follows. Inhibited by Hg(2+). Oxidoreductase involved in the biosynthesis of cannabinoids-related terpenophenolic natural products, which have pharmacological activity. Catalyzes the oxidative cyclization of the monoterpene moiety in cannabigerolic acid (CBGA), producing delta(9)-tetrahydrocannabinolate (THCA), the major cannabioid in drug-type Cannabis plants. Can also use cannabinerolic acid as substrate, but not cannabigerol or cannabinerol. The polypeptide is Tetrahydrocannabinolic acid synthase (Cannabis sativa (Hemp)).